An 880-amino-acid chain; its full sequence is Replication origin-binding protein (880 aa).

The Helicase ATP-binding domain occupies 60–225; it reads PLPIRTKPVL…AELRGAENVH (166 aa). 73–80 contacts ATP; the sequence is APMGSGKT. The tract at residues 260–287 is disordered; sequence PPAGDESREASASQPPPHDSSNEPCAPE.

It belongs to the herpesviridae OriBP family. As to quaternary structure, homodimer. Interacts with the major DNA-binding protein. Interacts with the DNA helicase/primase complex-associated protein and the polymerase accessory protein.

It is found in the host nucleus. Functionally, functions as a docking protein to recruit essential components of the viral replication machinery to viral DNA origins. In the presence of the major DNA-binding protein, opens dsDNA leading to a conformational change in the origin that facilitates DNA unwinding and subsequent replication. The protein is Replication origin-binding protein (UL9) of Psittacid herpesvirus 1 (isolate Amazon parrot/-/97-0001/1997) (PsHV-1).